Here is a 277-residue protein sequence, read N- to C-terminus: MEMO1 family protein TRQ2_0860 (277 aa).

It belongs to the MEMO1 family.

This chain is MEMO1 family protein TRQ2_0860, found in Thermotoga sp. (strain RQ2).